The sequence spans 71 residues: Paralithocin 2 (71 aa).

A signal peptide spans 1–23; sequence MGAAKVLLVVLAVMVAVPNLAEG. 4 disulfides stabilise this stretch: Cys-29/Cys-58, Cys-34/Cys-54, Cys-39/Cys-52, and Cys-44/Cys-55. Position 70 is an arginine amide; partial (Arg-70).

It belongs to the paralithocin family. Post-translationally, the amidated form is probably the active form.

In terms of biological role, has antibacterial activity, mainly against marine Gram-positive bacteria like C.maltaromaticum (MIC=50 uM), C.mobile (MIC=50 uM), C.divergens (MIC=50 uM) and C.funditum (MIC=25 uM) but also against C.glutamicum (MIC=12.5 uM). Has very little or no activity against Gram-negative bacteria. This chain is Paralithocin 2, found in Paralithodes camtschaticus (Red king crab).